The chain runs to 319 residues: GTP 3',8-cyclase (319 aa).

One can recognise a Radical SAM core domain in the interval 4–227 (KHGRKINYLR…VETDKSSTAL (224 aa)). Arg-13 provides a ligand contact to GTP. Positions 20 and 24 each coordinate [4Fe-4S] cluster. Tyr-26 lines the S-adenosyl-L-methionine pocket. Cys-27 lines the [4Fe-4S] cluster pocket. GTP is bound at residue Arg-63. S-adenosyl-L-methionine is bound at residue Gly-67. Thr-94 lines the GTP pocket. Ser-118 is an S-adenosyl-L-methionine binding site. A GTP-binding site is contributed by Lys-155. Met-189 lines the S-adenosyl-L-methionine pocket. Residues Cys-249 and Cys-252 each coordinate [4Fe-4S] cluster. 254–256 (RVR) contacts GTP. Residue Cys-266 coordinates [4Fe-4S] cluster.

This sequence belongs to the radical SAM superfamily. MoaA family. In terms of assembly, monomer and homodimer. It depends on [4Fe-4S] cluster as a cofactor.

It carries out the reaction GTP + AH2 + S-adenosyl-L-methionine = (8S)-3',8-cyclo-7,8-dihydroguanosine 5'-triphosphate + 5'-deoxyadenosine + L-methionine + A + H(+). It participates in cofactor biosynthesis; molybdopterin biosynthesis. Functionally, catalyzes the cyclization of GTP to (8S)-3',8-cyclo-7,8-dihydroguanosine 5'-triphosphate. The sequence is that of GTP 3',8-cyclase from Clostridium botulinum (strain Langeland / NCTC 10281 / Type F).